A 442-amino-acid polypeptide reads, in one-letter code: D-inositol 3-phosphate glycosyltransferase (442 aa).

Residue His15 participates in 1D-myo-inositol 3-phosphate binding. UDP-N-acetyl-alpha-D-glucosamine-binding positions include 21-22 and Gly29; that span reads QP. Residues 26–31, Lys84, Tyr117, Thr141, and Arg161 contribute to the 1D-myo-inositol 3-phosphate site; that span reads DAGGMN. 3 residues coordinate UDP-N-acetyl-alpha-D-glucosamine: Arg235, Lys240, and Gln299. The Mg(2+) site is built by Tyr308, Arg309, and Ser311. UDP-N-acetyl-alpha-D-glucosamine is bound by residues Glu321 and Glu329. Thr335 is a binding site for Mg(2+).

It belongs to the glycosyltransferase group 1 family. MshA subfamily. In terms of assembly, homodimer.

It catalyses the reaction 1D-myo-inositol 3-phosphate + UDP-N-acetyl-alpha-D-glucosamine = 1D-myo-inositol 2-acetamido-2-deoxy-alpha-D-glucopyranoside 3-phosphate + UDP + H(+). Catalyzes the transfer of a N-acetyl-glucosamine moiety to 1D-myo-inositol 3-phosphate to produce 1D-myo-inositol 2-acetamido-2-deoxy-glucopyranoside 3-phosphate in the mycothiol biosynthesis pathway. In Rhodococcus erythropolis (strain PR4 / NBRC 100887), this protein is D-inositol 3-phosphate glycosyltransferase.